We begin with the raw amino-acid sequence, 859 residues long: Active breakpoint cluster region-related protein (859 aa).

A disordered region spans residues 31–84 (AEGHEEQKGPPEGSETMPYIDESPTMSPQLSARSQGGGESISPTPPEGLAPGVE). Polar residues predominate over residues 54–64 (PTMSPQLSARS). Phosphoserine is present on S57. Residues 91–284 (MRKLVLSGFL…QNFLSSINED (194 aa)) form the DH domain. Positions 301–459 (QLVKDGFLVE…WREAIQKLQK (159 aa)) constitute a PH domain. In terms of domain architecture, C2 spans 484–613 (TVHNIPVTSN…ESKNWHTDVI (130 aa)). The Rho-GAP domain maps to 647–845 (VKISVVTKRE…YYLQHPPISF (199 aa)).

As to quaternary structure, interacts with DLG4. As to expression, expressed in brain, including the cortex, hippocampus, cerebellum, and brainstem, as well as the spinal cord (at protein level).

Its subcellular location is the cell projection. It localises to the dendritic spine. The protein resides in the axon. It is found in the synapse. Protein with a unique structure having two opposing regulatory activities toward small GTP-binding proteins. The C-terminus is a GTPase-activating protein domain which stimulates GTP hydrolysis by RAC1, RAC2 and CDC42. Accelerates the intrinsic rate of GTP hydrolysis of RAC1 or CDC42, leading to down-regulation of the active GTP-bound form. The central Dbl homology (DH) domain functions as guanine nucleotide exchange factor (GEF) that modulates the GTPases CDC42, RHOA and RAC1. Promotes the conversion of CDC42, RHOA and RAC1 from the GDP-bound to the GTP-bound form. Functions as an important negative regulator of neuronal RAC1 activity. Regulates macrophage functions such as CSF-1 directed motility and phagocytosis through the modulation of RAC1 activity. In Rattus norvegicus (Rat), this protein is Active breakpoint cluster region-related protein.